A 583-amino-acid polypeptide reads, in one-letter code: Protein disulfide-isomerase-like protein of the testis (583 aa).

The signal sequence occupies residues 1–17; sequence MDLLWMPLLLVAARISA. 4 N-linked (GlcNAc...) asparagine glycosylation sites follow: Asn58, Asn128, Asn160, and Asn340. The 64-residue stretch at 388–451 folds into the Thioredoxin domain; the sequence is LVKQLVGKNF…IAKIDITAND (64 aa). Composition is skewed to basic and acidic residues over residues 522–531 and 540–559; these read EVPMMKKELP and NVTK…KTSE. The segment at 522–583 is disordered; sequence EVPMMKKELP…KKKPKVKEEL (62 aa). Asn540 carries an N-linked (GlcNAc...) asparagine glycan. The segment covering 573–583 has biased composition (basic residues); that stretch reads QKKKPKVKEEL. The short motif at 580 to 583 is the Prevents secretion from ER element; that stretch reads KEEL.

This sequence belongs to the protein disulfide isomerase family. Homodimer. The homodimer is not disulfide-linked. Interacts with ERO1A and CLGN. N-glycosylated.

Its subcellular location is the endoplasmic reticulum. In terms of biological role, probable redox-inactive chaperone involved in spermatogenesis. In Macaca fascicularis (Crab-eating macaque), this protein is Protein disulfide-isomerase-like protein of the testis (PDILT).